The sequence spans 138 residues: Ribulose bisphosphate carboxylase small subunit (138 aa).

Belongs to the RuBisCO small chain family. Heterohexadecamer of 8 large and 8 small subunits.

The protein resides in the plastid. The protein localises to the chloroplast. Functionally, ruBisCO catalyzes two reactions: the carboxylation of D-ribulose 1,5-bisphosphate, the primary event in carbon dioxide fixation, as well as the oxidative fragmentation of the pentose substrate in the photorespiration process. Both reactions occur simultaneously and in competition at the same active site. Although the small subunit is not catalytic it is essential for maximal activity. Carbon dioxide and oxygen bind in the same pocket of the enzyme in a similar manner. This is Ribulose bisphosphate carboxylase small subunit from Galdieria sulphuraria (Red alga).